Consider the following 206-residue polypeptide: MAEYLVPKSAVVFEEEIKKSRFITYLQHTEGLEDARAFWAKIKQEHPNARHHCWAAVAGKPTDSLQLGFSDDGEPAGTAGKPMLSALQGSQLGEISAVVVRYYGGILLGTGGLVRAYGNGVQQALKLIESEIKVERTLFKLDCDYGQLRLVQQLCEKYQVEILSQGFQANIHLILGISEKTIEAFSSELTEKSSGRLVIQLLEIGE.

This sequence belongs to the IMPACT family.

The protein is IMPACT family member HI_0722 of Haemophilus influenzae (strain ATCC 51907 / DSM 11121 / KW20 / Rd).